A 198-amino-acid chain; its full sequence is Cyclin-dependent kinase inhibitor 1B (198 aa).

The span at 1–11 shows a compositional bias: polar residues; sequence MSNVRVSNGSP. The tract at residues 1-34 is disordered; the sequence is MSNVRVSNGSPSLERMDARQAEHPKPSACRNLFG. Position 10 is a phosphoserine; by UHMK1 (S10). The segment covering 14-25 has biased composition (basic and acidic residues); sequence ERMDARQAEHPK. An interaction with CDK2 region spans residues 51–91; sequence DMEEASQRKWNFDFQNHNPLEGRYQWQEVDKGSLPEFYYRP. Y74 is subject to Phosphotyrosine; by SRC. A disordered region spans residues 85–198; it reads PEFYYRPPRP…KKPGLRRHQT (114 aa). Y88 bears the Phosphotyrosine; by ABL, LYN and SRC mark. Phosphotyrosine is present on Y89. Over residues 104–124 the composition is skewed to polar residues; it reads QESQDVSGSRQAVPSIGSQAY. Positions 153-169 match the Nuclear localization signal motif; the sequence is KRPAADDSSSQNKRANR. Residue T170 is modified to Phosphothreonine. A compositionally biased stretch (polar residues) spans 175-186; that stretch reads SDGSLNAGSVEQ. A Phosphothreonine; by PKB/AKT1, CDK1 and CDK2 modification is found at T187. T198 carries the post-translational modification Phosphothreonine; by CaMK1, PKB/AKT1, RPS6KA1, RPS6KA3 and PIM1.

This sequence belongs to the CDI family. In terms of assembly, forms a ternary complex composed of CCNE1, CDK2 and CDKN1B. Interacts directly with CCNE1; the interaction is inhibited by CDK2-dependent phosphorylation on Thr-187. Interacts with COPS5, subunit of the COP9 signalosome complex; the interaction leads to CDKN1B degradation. Interacts with NUP50; the interaction leads to nuclear import and degradation of phosphorylated CDKN1B. Interacts with CCND1 and SNX6. Interacts (Thr-198-phosphorylated form) with 14-3-3 proteins, binds strongly YWHAQ, weakly YWHAE and YWHAH, but not YWHAB nor YWHAZ; the interaction with YWHAQ results in translocation to the cytoplasm. Interacts with AKT1 and LYN; the interactions lead to cytoplasmic mislocation, phosphorylation of CDKN1B and inhibition of cell cycle arrest. Forms a ternary complex with CCNA2 and CDK2; CDKN1B inhibits the kinase activity of CDK2 through conformational rearrangements. Interacts (unphosphorylated form) with CDK2. Forms a complex with CDK2 and SPDYA, but does not directly interact with SPDYA. Forms a ternary complex composed of cyclin D, CDK4 and CDKN1B. Interacts (phosphorylated on Tyr-88 and Tyr-89) with CDK4; the interaction is required for cyclin D and CDK4 complex assembly, induces nuclear translocation and activates the CDK4 kinase activity. Interacts with GRB2. Interacts with PIM1. Identified in a complex with SKP1, SKP2 and CKS1B. Interacts with UHMK1; the interaction leads to cytoplasmic mislocation, phosphorylation of CDKN1B and inhibition of cell cycle arrest. Also interacts with CDK1. Dephosphorylated on Thr-187 by PPM1H, leading to CDKN1B stability. Post-translationally, phosphorylated; phosphorylation occurs on serine, threonine and tyrosine residues. Phosphorylation on Ser-10 is the major site of phosphorylation in resting cells, takes place at the G(0)-G(1) phase and leads to protein stability. Phosphorylation on other sites is greatly enhanced by mitogens, growth factors, cMYC and in certain cancer cell lines. The phosphorylated form found in the cytoplasm is inactivate. Phosphorylation on Thr-198 is required for interaction with 14-3-3 proteins. Phosphorylation on Thr-187, by CDK1 and CDK2 leads to protein ubiquitination and proteasomal degradation. Tyrosine phosphorylation promotes this process. Phosphorylation by PKB/AKT1 can be suppressed by LY294002, an inhibitor of the catalytic subunit of PI3K. Phosphorylation on Tyr-88 and Tyr-89 has no effect on binding CDK2, but is required for binding CDK4. Dephosphorylated on tyrosine residues by G-CSF. Dephosphorylated on Thr-187 by PPM1H, leading to CDKN1B stability. In terms of processing, ubiquitinated; in the cytoplasm by the KPC complex (composed of RNF123/KPC1 and UBAC1/KPC2) and, in the nucleus, by SCF(SKP2). The latter requires prior phosphorylation on Thr-187. Ubiquitinated; by a TRIM21-containing SCF(SKP2)-like complex; leads to its degradation. Subject to degradation in the lysosome. Interaction with SNX6 promotes lysosomal degradation.

It localises to the nucleus. The protein localises to the cytoplasm. The protein resides in the endosome. Its function is as follows. Important regulator of cell cycle progression. Inhibits the kinase activity of CDK2 bound to cyclin A, but has little inhibitory activity on CDK2 bound to SPDYA. Involved in G1 arrest. Potent inhibitor of cyclin E- and cyclin A-CDK2 complexes. Forms a complex with cyclin type D-CDK4 complexes and is involved in the assembly, stability, and modulation of CCND1-CDK4 complex activation. Acts either as an inhibitor or an activator of cyclin type D-CDK4 complexes depending on its phosphorylation state and/or stoichometry. This is Cyclin-dependent kinase inhibitor 1B (CDKN1B) from Cricetulus griseus (Chinese hamster).